Reading from the N-terminus, the 260-residue chain is Ribosomal RNA small subunit methyltransferase A (260 aa).

Residues Leu23, Gly48, Glu69, Asp94, and Asn110 each contribute to the S-adenosyl-L-methionine site.

Belongs to the class I-like SAM-binding methyltransferase superfamily. rRNA adenine N(6)-methyltransferase family. RsmA subfamily.

The protein localises to the cytoplasm. It catalyses the reaction adenosine(1518)/adenosine(1519) in 16S rRNA + 4 S-adenosyl-L-methionine = N(6)-dimethyladenosine(1518)/N(6)-dimethyladenosine(1519) in 16S rRNA + 4 S-adenosyl-L-homocysteine + 4 H(+). Its function is as follows. Specifically dimethylates two adjacent adenosines (A1518 and A1519) in the loop of a conserved hairpin near the 3'-end of 16S rRNA in the 30S particle. May play a critical role in biogenesis of 30S subunits. The protein is Ribosomal RNA small subunit methyltransferase A of Thermotoga neapolitana (strain ATCC 49049 / DSM 4359 / NBRC 107923 / NS-E).